A 196-amino-acid chain; its full sequence is Pyridoxal 5'-phosphate synthase subunit PdxT (196 aa).

47-49 is an L-glutamine binding site; the sequence is GES. Cys-79 (nucleophile) is an active-site residue. L-glutamine contacts are provided by residues Arg-106 and 134-135; that span reads IR. Catalysis depends on charge relay system residues His-170 and Glu-172.

The protein belongs to the glutaminase PdxT/SNO family. As to quaternary structure, in the presence of PdxS, forms a dodecamer of heterodimers. Only shows activity in the heterodimer.

The catalysed reaction is aldehydo-D-ribose 5-phosphate + D-glyceraldehyde 3-phosphate + L-glutamine = pyridoxal 5'-phosphate + L-glutamate + phosphate + 3 H2O + H(+). It catalyses the reaction L-glutamine + H2O = L-glutamate + NH4(+). The protein operates within cofactor biosynthesis; pyridoxal 5'-phosphate biosynthesis. Catalyzes the hydrolysis of glutamine to glutamate and ammonia as part of the biosynthesis of pyridoxal 5'-phosphate. The resulting ammonia molecule is channeled to the active site of PdxS. The protein is Pyridoxal 5'-phosphate synthase subunit PdxT of Bacillus mycoides (strain KBAB4) (Bacillus weihenstephanensis).